The sequence spans 198 residues: Penicillin-binding protein activator LpoB (198 aa).

Positions 1-19 are cleaved as a signal peptide; sequence MIRSVNRTGALMMALILSG. Cys20 carries N-palmitoyl cysteine lipidation. A lipid anchor (S-diacylglycerol cysteine) is attached at Cys20. Low complexity predominate over residues 26–37; sequence QPAPVEPTQPVE. The segment at 26-59 is disordered; sequence QPAPVEPTQPVEPVQPVPQPEQPIPQPQPVPQPP. A compositionally biased stretch (pro residues) spans 38–59; that stretch reads PVQPVPQPEQPIPQPQPVPQPP.

It belongs to the LpoB family. As to quaternary structure, interacts with PBP1b.

It is found in the cell outer membrane. Its function is as follows. Regulator of peptidoglycan synthesis that is essential for the function of penicillin-binding protein 1B (PBP1b). This chain is Penicillin-binding protein activator LpoB, found in Pantoea ananatis (strain LMG 20103).